Reading from the N-terminus, the 372-residue chain is GDP-mannose transporter GONST3 (372 aa).

10 helical membrane-spanning segments follow: residues 33-53 (ASVY…SIIN), 60-80 (FPYP…GVLL), 92-112 (LNLL…LSLF), 125-145 (TFIV…TLFL), 155-175 (WGSL…DYQF), 177-197 (IAAY…FVYI), 209-229 (WGLV…ELLI), 251-271 (VVLP…FGFS), 280-300 (GFTV…LMVW), and 303-323 (HSTF…VMYQ). Positions 331-372 (NATQEAKPQEQDEEQEKLLEMQENKESNSVDIKETLKSEEKL) are disordered. The span at 346-372 (EKLLEMQENKESNSVDIKETLKSEEKL) shows a compositional bias: basic and acidic residues.

Belongs to the nucleotide-sugar transporter family. GDP-Mannose:GMP antiporter (GMA) (TC 2.A.7.13) subfamily. Expressed in rosette leaves, stems, flowers and siliques.

The protein localises to the golgi apparatus membrane. GDP-mannose transporter that may be involved in the import of GDP-mannose from the cytoplasm into the Golgi lumen. The polypeptide is GDP-mannose transporter GONST3 (Arabidopsis thaliana (Mouse-ear cress)).